The chain runs to 84 residues: Large ribosomal subunit protein bL27 (84 aa).

Belongs to the bacterial ribosomal protein bL27 family.

This is Large ribosomal subunit protein bL27 from Campylobacter lari (strain RM2100 / D67 / ATCC BAA-1060).